A 191-amino-acid chain; its full sequence is uncharacterized protein (191 aa).

This is an uncharacterized protein from Bacillus subtilis (strain 168).